The following is a 173-amino-acid chain: Methylated-DNA--protein-cysteine methyltransferase (173 aa).

Cys-143 acts as the Nucleophile; methyl group acceptor in catalysis.

The protein belongs to the MGMT family.

It localises to the cytoplasm. It carries out the reaction a 6-O-methyl-2'-deoxyguanosine in DNA + L-cysteinyl-[protein] = S-methyl-L-cysteinyl-[protein] + a 2'-deoxyguanosine in DNA. The enzyme catalyses a 4-O-methyl-thymidine in DNA + L-cysteinyl-[protein] = a thymidine in DNA + S-methyl-L-cysteinyl-[protein]. In terms of biological role, involved in the cellular defense against the biological effects of O6-methylguanine (O6-MeG) and O4-methylthymine (O4-MeT) in DNA. Repairs the methylated nucleobase in DNA by stoichiometrically transferring the methyl group to a cysteine residue in the enzyme. This is a suicide reaction: the enzyme is irreversibly inactivated. In Pyrococcus sp. (strain NA2), this protein is Methylated-DNA--protein-cysteine methyltransferase.